Here is a 114-residue protein sequence, read N- to C-terminus: Hydrogenase maturation factor HypA (114 aa).

His2 provides a ligand contact to Ni(2+). Zn(2+) is bound by residues Cys73, Cys76, Cys90, and Cys93.

This sequence belongs to the HypA/HybF family.

In terms of biological role, involved in the maturation of [NiFe] hydrogenases. Required for nickel insertion into the metal center of the hydrogenase. This chain is Hydrogenase maturation factor HypA, found in Chloroflexus aggregans (strain MD-66 / DSM 9485).